Consider the following 453-residue polypeptide: Exopolyphosphatase PRUNE1 (453 aa).

M1 carries the post-translational modification N-acetylmethionine. Mn(2+) is bound by residues D28, D30, D106, and D179. The DHH motif motif lies at D106 to H108. The segment at S393 to P420 is essential for homodimerization. A disordered region spans residues I395 to L421. Residue S399 is modified to Phosphoserine. T410 carries the phosphothreonine modification. S414 carries the phosphoserine modification.

The protein belongs to the PPase class C family. Prune subfamily. Homooligomer. Able to homodimerize via its C-terminal domain. Interacts with NME1. Interacts with GSK3; at focal adhesion complexes where paxillin and vinculin are colocalized. Interacts with alpha and beta tubulin. The cofactor is Mn(2+). As to expression, ubiquitously expressed. Seems to be overexpressed in aggressive sarcoma subtypes, such as leiomyosarcomas and malignant fibrous histiocytomas (MFH) as well as in the less malignant liposarcomas.

It localises to the cytoplasm. The protein localises to the nucleus. It is found in the cell junction. The protein resides in the focal adhesion. The enzyme catalyses diphosphate + H2O = 2 phosphate + H(+). With respect to regulation, activated by magnesium ions and inhibited by manganese ions. Inhibited by dipyridamole, moderately sensitive to IBMX and inhibited by vinpocetine. In terms of biological role, phosphodiesterase (PDE) that has higher activity toward cAMP than cGMP, as substrate. Plays a role in cell proliferation, migration and differentiation, and acts as a negative regulator of NME1. Plays a role in the regulation of neurogenesis. Involved in the regulation of microtubule polymerization. The protein is Exopolyphosphatase PRUNE1 of Homo sapiens (Human).